Reading from the N-terminus, the 363-residue chain is NAD(P)H-quinone oxidoreductase subunit 1, chloroplastic (363 aa).

9 helical membrane passes run 30 to 50 (LVPILSLVLGITLGVLVIVWL), 98 to 118 (FSIGPSIAVISILLSYSVIPF), 129 to 149 (IGVFLWIAVSSIAPIGLLMSG), 165 to 185 (AAQSISYEIPLTLCLLSISLL), 203 to 223 (LWGWNLWRQPIGFLVFLISSL), 248 to 268 (YSGIKFGLFYVASYLNLLVSS), 269 to 289 (LFVTVLYLGGWNISISYIFVP), 300 to 320 (VFGTTIGIFTTLAKTYLFLFI), and 334 to 354 (DQLLNLGWKFLLPISLGNLLL).

It belongs to the complex I subunit 1 family. NDH is composed of at least 16 different subunits, 5 of which are encoded in the nucleus.

The protein resides in the plastid. It is found in the chloroplast thylakoid membrane. The enzyme catalyses a plastoquinone + NADH + (n+1) H(+)(in) = a plastoquinol + NAD(+) + n H(+)(out). It catalyses the reaction a plastoquinone + NADPH + (n+1) H(+)(in) = a plastoquinol + NADP(+) + n H(+)(out). NDH shuttles electrons from NAD(P)H:plastoquinone, via FMN and iron-sulfur (Fe-S) centers, to quinones in the photosynthetic chain and possibly in a chloroplast respiratory chain. The immediate electron acceptor for the enzyme in this species is believed to be plastoquinone. Couples the redox reaction to proton translocation, and thus conserves the redox energy in a proton gradient. This Oenothera elata subsp. hookeri (Hooker's evening primrose) protein is NAD(P)H-quinone oxidoreductase subunit 1, chloroplastic.